A 512-amino-acid polypeptide reads, in one-letter code: ETS translocation variant 3 (512 aa).

A DNA-binding region (ETS) is located at residues 35 to 116 (IQLWHFILEL…KGKRFTYKFN (82 aa)). The interval 136 to 222 (VPQSAPPVPT…NAIGGGGIGH (87 aa)) is disordered. Residues S139, S159, and S315 each carry the phosphoserine modification. A compositionally biased stretch (polar residues) spans 158–184 (HSPTNDVQPGRFSASSLTASGQESSNG). The tract at residues 336-512 (PEESTQFSIK…QGLATAAADA (177 aa)) is disordered. A compositionally biased stretch (basic and acidic residues) spans 380–406 (IKVEPASEKDPESLRQSAREKEEHTQE). Residue K381 forms a Glycyl lysine isopeptide (Lys-Gly) (interchain with G-Cter in SUMO2) linkage. K388 carries the N6-acetyllysine; alternate modification. A Glycyl lysine isopeptide (Lys-Gly) (interchain with G-Cter in SUMO2); alternate cross-link involves residue K388. Residues 443 to 452 (EPLEVTEDIE) show a composition bias toward acidic residues. Basic and acidic residues-rich tracts occupy residues 453–468 (DRPGKEPSAPEKKEDA) and 479–491 (RWNDDPEARELSK).

Belongs to the ETS family.

The protein localises to the nucleus. In terms of biological role, transcriptional repressor that contribute to growth arrest during terminal macrophage differentiation by repressing target genes involved in Ras-dependent proliferation. Represses MMP1 promoter activity. This chain is ETS translocation variant 3 (ETV3), found in Pan paniscus (Pygmy chimpanzee).